A 148-amino-acid polypeptide reads, in one-letter code: Deoxyuridine 5'-triphosphate nucleotidohydrolase (148 aa).

Substrate contacts are provided by residues 68-70, N81, 85-87, and K95; these read RSG and TID.

This sequence belongs to the dUTPase family. Mg(2+) serves as cofactor.

It carries out the reaction dUTP + H2O = dUMP + diphosphate + H(+). It participates in pyrimidine metabolism; dUMP biosynthesis; dUMP from dCTP (dUTP route): step 2/2. Its function is as follows. This enzyme is involved in nucleotide metabolism: it produces dUMP, the immediate precursor of thymidine nucleotides and it decreases the intracellular concentration of dUTP so that uracil cannot be incorporated into DNA. The polypeptide is Deoxyuridine 5'-triphosphate nucleotidohydrolase (Rickettsia prowazekii (strain Madrid E)).